Here is a 565-residue protein sequence, read N- to C-terminus: Dihydroxy-acid dehydratase (565 aa).

Asp-80 serves as a coordination point for Mg(2+). Cys-121 lines the [2Fe-2S] cluster pocket. The Mg(2+) site is built by Asp-122 and Lys-123. At Lys-123 the chain carries N6-carboxylysine. Cys-194 provides a ligand contact to [2Fe-2S] cluster. Residue Glu-447 participates in Mg(2+) binding. Catalysis depends on Ser-473, which acts as the Proton acceptor.

The protein belongs to the IlvD/Edd family. Homodimer. It depends on [2Fe-2S] cluster as a cofactor. The cofactor is Mg(2+).

The catalysed reaction is (2R)-2,3-dihydroxy-3-methylbutanoate = 3-methyl-2-oxobutanoate + H2O. It carries out the reaction (2R,3R)-2,3-dihydroxy-3-methylpentanoate = (S)-3-methyl-2-oxopentanoate + H2O. Its pathway is amino-acid biosynthesis; L-isoleucine biosynthesis; L-isoleucine from 2-oxobutanoate: step 3/4. It functions in the pathway amino-acid biosynthesis; L-valine biosynthesis; L-valine from pyruvate: step 3/4. Functionally, functions in the biosynthesis of branched-chain amino acids. Catalyzes the dehydration of (2R,3R)-2,3-dihydroxy-3-methylpentanoate (2,3-dihydroxy-3-methylvalerate) into 2-oxo-3-methylpentanoate (2-oxo-3-methylvalerate) and of (2R)-2,3-dihydroxy-3-methylbutanoate (2,3-dihydroxyisovalerate) into 2-oxo-3-methylbutanoate (2-oxoisovalerate), the penultimate precursor to L-isoleucine and L-valine, respectively. The protein is Dihydroxy-acid dehydratase of Chlorobium phaeovibrioides (strain DSM 265 / 1930) (Prosthecochloris vibrioformis (strain DSM 265)).